The following is a 463-amino-acid chain: Bifunctional protein HldE (463 aa).

The interval 1 to 313 is ribokinase; sequence MTGPMAVRTD…RALAALPDTD (313 aa). Residue Asp258 is part of the active site. The tract at residues 331 to 463 is cytidylyltransferase; it reads AAGGCFDLLH…LLARAAEGAR (133 aa).

In the N-terminal section; belongs to the carbohydrate kinase PfkB family. It in the C-terminal section; belongs to the cytidylyltransferase family. In terms of assembly, homodimer.

The catalysed reaction is D-glycero-beta-D-manno-heptose 7-phosphate + ATP = D-glycero-beta-D-manno-heptose 1,7-bisphosphate + ADP + H(+). The enzyme catalyses D-glycero-beta-D-manno-heptose 1-phosphate + ATP + H(+) = ADP-D-glycero-beta-D-manno-heptose + diphosphate. It participates in nucleotide-sugar biosynthesis; ADP-L-glycero-beta-D-manno-heptose biosynthesis; ADP-L-glycero-beta-D-manno-heptose from D-glycero-beta-D-manno-heptose 7-phosphate: step 1/4. The protein operates within nucleotide-sugar biosynthesis; ADP-L-glycero-beta-D-manno-heptose biosynthesis; ADP-L-glycero-beta-D-manno-heptose from D-glycero-beta-D-manno-heptose 7-phosphate: step 3/4. Catalyzes the phosphorylation of D-glycero-D-manno-heptose 7-phosphate at the C-1 position to selectively form D-glycero-beta-D-manno-heptose-1,7-bisphosphate. In terms of biological role, catalyzes the ADP transfer from ATP to D-glycero-beta-D-manno-heptose 1-phosphate, yielding ADP-D-glycero-beta-D-manno-heptose. This chain is Bifunctional protein HldE, found in Streptomyces coelicolor (strain ATCC BAA-471 / A3(2) / M145).